Consider the following 500-residue polypeptide: Abscisic acid 8'-hydroxylase 3 (500 aa).

The helical transmembrane segment at Ala-3–Val-23 threads the bilayer. Cys-426 is a heme binding site.

The protein belongs to the cytochrome P450 family. Heme is required as a cofactor.

It localises to the membrane. The enzyme catalyses 2-cis-(+)-abscisate + reduced [NADPH--hemoprotein reductase] + O2 = (+)-8'-hydroxyabscisate + oxidized [NADPH--hemoprotein reductase] + H2O + H(+). It participates in plant hormone degradation; abscisic acid degradation. Its function is as follows. Involved in the oxidative degradation of abscisic acid. The sequence is that of Abscisic acid 8'-hydroxylase 3 (CYP707A7) from Oryza sativa subsp. indica (Rice).